We begin with the raw amino-acid sequence, 852 residues long: Taste receptor type 1 member 3 (852 aa).

An N-terminal signal peptide occupies residues 1–20 (MLGPAVLGLSLWALLHPGTG). At 21–570 (APLCLSQQLR…FLAWGEPAVL (550 aa)) the chain is on the extracellular side. Residues Asn-85, Asn-130, Asn-264, Asn-285, Asn-380, Asn-411, Asn-432, and Asn-475 are each glycosylated (N-linked (GlcNAc...) asparagine). The interval 536–545 (IACTFCGQDE) is required for brazzein responsiveness. The chain crosses the membrane as a helical span at residues 571–591 (LLLLLLSLALGLVLAALGLFV). The Cytoplasmic segment spans residues 592-603 (HHRDSPLVQASG). The chain crosses the membrane as a helical span at residues 604-624 (GPLACFGLVCLGLVCLSVLLF). At 625–639 (PGQPSPARCLAQQPL) the chain is on the extracellular side. The chain crosses the membrane as a helical span at residues 640 to 660 (SHLPLTGCLSTLFLQAAEIFV). Residues 661–682 (ESELPLSWADRLSGCLRGPWAW) lie on the Cytoplasmic side of the membrane. Residues 683-703 (LVVLLAMLVEVALCTWYLVAF) traverse the membrane as a helical segment. At 704-729 (PPEVVTDWHMLPTEALVHCRTRSWVS) the chain is on the extracellular side. A helical membrane pass occupies residues 730–750 (FGLAHATNATLAFLCFLGTFL). The Cytoplasmic portion of the chain corresponds to 751–762 (VRSQPGCYNRAR). The chain crosses the membrane as a helical span at residues 763–783 (GLTFAMLAYFITWVSFVPLLA). At 784–789 (NVQVVL) the chain is on the extracellular side. Residues 790–810 (RPAVQMGALLLCVLGILAAFH) form a helical membrane-spanning segment. Residues 811–852 (LPRCYLLMRQPGLNTPEFFLGGGPGDAQGQNDGNTGNQGKHE) lie on the Cytoplasmic side of the membrane.

The protein belongs to the G-protein coupled receptor 3 family. TAS1R subfamily. As to quaternary structure, forms homodimers or heterodimers with TAS1R1 and TAS1R2.

It is found in the cell membrane. Functionally, putative taste receptor. TAS1R1/TAS1R3 responds to the umami taste stimulus (the taste of monosodium glutamate). TAS1R2/TAS1R3 recognizes diverse natural and synthetic sweeteners. TAS1R3 is essential for the recognition and response to the disaccharide trehalose. Sequence differences within and between species can significantly influence the selectivity and specificity of taste responses. The polypeptide is Taste receptor type 1 member 3 (TAS1R3) (Homo sapiens (Human)).